Here is a 1066-residue protein sequence, read N- to C-terminus: Beta-galactosidase (1066 aa).

Substrate is bound by residues Asn-110 and Asp-209. Asp-209 is a binding site for Na(+). Mg(2+) contacts are provided by Glu-432, His-434, and Glu-477. Substrate-binding positions include Glu-477 and 553–556; that span reads EYAH. The active-site Proton donor is Glu-477. Glu-553 acts as the Nucleophile in catalysis. Asn-613 provides a ligand contact to Mg(2+). Residues Phe-617 and Asn-620 each coordinate Na(+). Substrate is bound by residues Asn-620 and Trp-1041.

Belongs to the glycosyl hydrolase 2 family. Homotetramer. Mg(2+) is required as a cofactor. Na(+) serves as cofactor.

The enzyme catalyses Hydrolysis of terminal non-reducing beta-D-galactose residues in beta-D-galactosides.. In Yersinia pseudotuberculosis serotype O:1b (strain IP 31758), this protein is Beta-galactosidase.